Here is a 439-residue protein sequence, read N- to C-terminus: O-methyltransferase aurJ (439 aa).

Residue D283 coordinates S-adenosyl-L-methionine. H338 serves as the catalytic Proton acceptor.

This sequence belongs to the class I-like SAM-binding methyltransferase superfamily. Cation-independent O-methyltransferase family. COMT subfamily.

The enzyme catalyses norrubrofusarin + S-adenosyl-L-methionine = rubrofusarin + S-adenosyl-L-homocysteine + H(+). It functions in the pathway pigment biosynthesis. O-methyltransferase; part of the gene cluster that mediates the biosynthesis of aurofusarin, a red mycelium pigment which is acting as a mycotoxin. The first step is performed by the polyketide synthase which condenses one acetyl-CoA and 6 malonyl-CoA units to form the first intermediate, the cyclic heptaketide and yellow pigment YWA1. The C2 hydroxyl group in the pyrone ring of YWA1 is probably formed during ring closure by an aldol-type cyclization reaction. The dehydratase aurZ then acts as the first tailoring enzyme in the aurofusarin biosynthetic pathway by converting YWA1 to nor-rubrofusarin. Nor-rubrofusarin is then methylated to rubrofusarin by the O-methyltransferase aurJ. Rubrofusarin is then transported across the plasma membrane by the rubrofusarin-specific pump aurT for further enzymatic processing by the extracellular complex composed of GIP1, aurF, aurO and aurS to yield aurofusarin. The protein is O-methyltransferase aurJ of Gibberella zeae (strain ATCC MYA-4620 / CBS 123657 / FGSC 9075 / NRRL 31084 / PH-1) (Wheat head blight fungus).